Here is a 1251-residue protein sequence, read N- to C-terminus: ATP-dependent helicase/nuclease subunit A (1251 aa).

The 477-residue stretch at 5–481 (TKWTDEQWEA…IILSRNFRSR (477 aa)) folds into the UvrD-like helicase ATP-binding domain. An ATP-binding site is contributed by 26–33 (AAAGAGKT). The UvrD-like helicase C-terminal domain maps to 526–824 (TVGGEVEFHL…RIMSIHKSKG (299 aa)). The disordered stretch occupies residues 544–565 (NFTFENEGEEGRQADEGEEDEE).

This sequence belongs to the helicase family. AddA subfamily. Heterodimer of AddA and AddB/RexB. Requires Mg(2+) as cofactor.

The catalysed reaction is Couples ATP hydrolysis with the unwinding of duplex DNA by translocating in the 3'-5' direction.. It carries out the reaction ATP + H2O = ADP + phosphate + H(+). Functionally, the heterodimer acts as both an ATP-dependent DNA helicase and an ATP-dependent, dual-direction single-stranded exonuclease. Recognizes the chi site generating a DNA molecule suitable for the initiation of homologous recombination. The AddA nuclease domain is required for chi fragment generation; this subunit has the helicase and 3' -&gt; 5' nuclease activities. The sequence is that of ATP-dependent helicase/nuclease subunit A from Acetivibrio thermocellus (strain ATCC 27405 / DSM 1237 / JCM 9322 / NBRC 103400 / NCIMB 10682 / NRRL B-4536 / VPI 7372) (Clostridium thermocellum).